Reading from the N-terminus, the 164-residue chain is MADS-box transcription factor 51 (164 aa).

In terms of domain architecture, MADS-box spans 2–62 (ARRGRVQLRR…GKLYEYSSSS (61 aa)). A disordered region spans residues 133-164 (TKSKKMLAKQNGEGSRSRANSSGSRGQEEGSA).

Widely expressed.

Its subcellular location is the nucleus. Functionally, probable transcription factor involved in the regulation of flowering time under short day (SD) conditions. Functions as a promoter of flowering under SD conditions, upstream of EHD1, HD3A and MADS14, but downstream of GIGANTEA (GI). May transmit a SD promotion signal from GI to EHD1. Functions independently of MADS50 to control flowering time. The sequence is that of MADS-box transcription factor 51 from Oryza sativa subsp. japonica (Rice).